The chain runs to 797 residues: Xaa-Pro dipeptidyl-peptidase (797 aa).

Catalysis depends on charge relay system residues Ser-370, Asp-490, and His-521.

Belongs to the peptidase S15 family. As to quaternary structure, homodimer.

The protein localises to the cytoplasm. It catalyses the reaction Hydrolyzes Xaa-Pro-|- bonds to release unblocked, N-terminal dipeptides from substrates including Ala-Pro-|-p-nitroanilide and (sequentially) Tyr-Pro-|-Phe-Pro-|-Gly-Pro-|-Ile.. Removes N-terminal dipeptides sequentially from polypeptides having unsubstituted N-termini provided that the penultimate residue is proline. In Lacticaseibacillus paracasei (strain ATCC 334 / BCRC 17002 / CCUG 31169 / CIP 107868 / KCTC 3260 / NRRL B-441) (Lactobacillus paracasei), this protein is Xaa-Pro dipeptidyl-peptidase.